The chain runs to 95 residues: Aspartyl/glutamyl-tRNA(Asn/Gln) amidotransferase subunit C (95 aa).

It belongs to the GatC family. In terms of assembly, heterotrimer of A, B and C subunits.

The enzyme catalyses L-glutamyl-tRNA(Gln) + L-glutamine + ATP + H2O = L-glutaminyl-tRNA(Gln) + L-glutamate + ADP + phosphate + H(+). The catalysed reaction is L-aspartyl-tRNA(Asn) + L-glutamine + ATP + H2O = L-asparaginyl-tRNA(Asn) + L-glutamate + ADP + phosphate + 2 H(+). Functionally, allows the formation of correctly charged Asn-tRNA(Asn) or Gln-tRNA(Gln) through the transamidation of misacylated Asp-tRNA(Asn) or Glu-tRNA(Gln) in organisms which lack either or both of asparaginyl-tRNA or glutaminyl-tRNA synthetases. The reaction takes place in the presence of glutamine and ATP through an activated phospho-Asp-tRNA(Asn) or phospho-Glu-tRNA(Gln). This chain is Aspartyl/glutamyl-tRNA(Asn/Gln) amidotransferase subunit C, found in Chlorobaculum parvum (strain DSM 263 / NCIMB 8327) (Chlorobium vibrioforme subsp. thiosulfatophilum).